We begin with the raw amino-acid sequence, 527 residues long: Glutamate--cysteine ligase (527 aa).

It belongs to the glutamate--cysteine ligase type 1 family. Type 1 subfamily.

The enzyme catalyses L-cysteine + L-glutamate + ATP = gamma-L-glutamyl-L-cysteine + ADP + phosphate + H(+). The protein operates within sulfur metabolism; glutathione biosynthesis; glutathione from L-cysteine and L-glutamate: step 1/2. This is Glutamate--cysteine ligase from Pseudomonas aeruginosa (strain ATCC 15692 / DSM 22644 / CIP 104116 / JCM 14847 / LMG 12228 / 1C / PRS 101 / PAO1).